A 160-amino-acid chain; its full sequence is Ribosomal RNA large subunit methyltransferase H (160 aa).

Residues Leu76, Gly108, and 127–132 each bind S-adenosyl-L-methionine; that span reads LGKMTW.

Belongs to the RNA methyltransferase RlmH family. In terms of assembly, homodimer.

The protein localises to the cytoplasm. The catalysed reaction is pseudouridine(1915) in 23S rRNA + S-adenosyl-L-methionine = N(3)-methylpseudouridine(1915) in 23S rRNA + S-adenosyl-L-homocysteine + H(+). Its function is as follows. Specifically methylates the pseudouridine at position 1915 (m3Psi1915) in 23S rRNA. In Rhizobium rhizogenes (strain K84 / ATCC BAA-868) (Agrobacterium radiobacter), this protein is Ribosomal RNA large subunit methyltransferase H.